Here is a 317-residue protein sequence, read N- to C-terminus: Apolipoprotein E (317 aa).

The N-terminal stretch at 1–18 is a signal peptide; that stretch reads MKVLWAALLVTFLAGCQA. Tandem repeats lie at residues 80–101, 102–123, 124–145, 146–167, 168–189, 190–211, 212–233, and 234–255. The segment at 80–255 is 8 X 22 AA approximate tandem repeats; that stretch reads ALMDETMKEL…RLDEVKEQVA (176 aa). At methionine 143 the chain carries Methionine sulfoxide. Serine 147 is subject to Phosphoserine. The interval 158–168 is LDL and other lipoprotein receptors binding; it reads HLRKLRKRLLR. 162–165 lines the heparin pocket; it reads LRKR. The segment at 210–290 is lipid-binding and lipoprotein association; that stretch reads AATVGSLAGQ…SWFEPLVEDM (81 aa). Residue 229–236 participates in heparin binding; sequence GERLRARM. The homooligomerization stretch occupies residues 266 to 317; sequence QQIRLQAEAFQARLKSWFEPLVEDMQRQWAGLVEKVQAAMGTSAAPVPSDNH. Positions 278–290 are specificity for association with VLDL; it reads RLKSWFEPLVEDM.

It belongs to the apolipoprotein A1/A4/E family. Homotetramer. May interact with ABCA1; functionally associated with ABCA1 in the biogenesis of HDLs. May interact with APP/A4 amyloid-beta peptide; the interaction is extremely stable in vitro but its physiological significance is unclear. May interact with MAPT. May interact with MAP2. In the cerebrospinal fluid, interacts with secreted SORL1. Interacts with PMEL; this allows the loading of PMEL luminal fragment on ILVs to induce fibril nucleation. APOE exists as multiple glycosylated and sialylated glycoforms within cells and in plasma. The extent of glycosylation and sialylation are tissue and context specific. Post-translationally, glycated in plasma VLDL. In terms of processing, phosphorylated by FAM20C in the extracellular medium.

Its subcellular location is the secreted. It is found in the extracellular space. It localises to the extracellular matrix. The protein resides in the extracellular vesicle. The protein localises to the endosome. Its subcellular location is the multivesicular body. Functionally, APOE is an apolipoprotein, a protein associating with lipid particles, that mainly functions in lipoprotein-mediated lipid transport between organs via the plasma and interstitial fluids. APOE is a core component of plasma lipoproteins and is involved in their production, conversion and clearance. Apolipoproteins are amphipathic molecules that interact both with lipids of the lipoprotein particle core and the aqueous environment of the plasma. As such, APOE associates with chylomicrons, chylomicron remnants, very low density lipoproteins (VLDL) and intermediate density lipoproteins (IDL) but shows a preferential binding to high-density lipoproteins (HDL). It also binds a wide range of cellular receptors including the LDL receptor/LDLR, the LDL receptor-related proteins LRP1, LRP2 and LRP8 and the very low-density lipoprotein receptor/VLDLR that mediate the cellular uptake of the APOE-containing lipoprotein particles. Finally, APOE also has a heparin-binding activity and binds heparan-sulfate proteoglycans on the surface of cells, a property that supports the capture and the receptor-mediated uptake of APOE-containing lipoproteins by cells. A main function of APOE is to mediate lipoprotein clearance through the uptake of chylomicrons, VLDLs, and HDLs by hepatocytes. APOE is also involved in the biosynthesis by the liver of VLDLs as well as their uptake by peripheral tissues ensuring the delivery of triglycerides and energy storage in muscle, heart and adipose tissues. By participating in the lipoprotein-mediated distribution of lipids among tissues, APOE plays a critical role in plasma and tissues lipid homeostasis. APOE is also involved in two steps of reverse cholesterol transport, the HDLs-mediated transport of cholesterol from peripheral tissues to the liver, and thereby plays an important role in cholesterol homeostasis. First, it is functionally associated with ABCA1 in the biogenesis of HDLs in tissues. Second, it is enriched in circulating HDLs and mediates their uptake by hepatocytes. APOE also plays an important role in lipid transport in the central nervous system, regulating neuron survival and sprouting. The chain is Apolipoprotein E (APOE) from Pan troglodytes (Chimpanzee).